The sequence spans 371 residues: tRNA 2-selenouridine synthase (371 aa).

One can recognise a Rhodanese domain in the interval 12–135 (FLDDVPMMDM…MRTFLLDTTQ (124 aa)). Catalysis depends on C95, which acts as the S-selanylcysteine intermediate.

Belongs to the SelU family. Monomer.

It catalyses the reaction 5-methylaminomethyl-2-thiouridine(34) in tRNA + selenophosphate + (2E)-geranyl diphosphate + H2O + H(+) = 5-methylaminomethyl-2-selenouridine(34) in tRNA + (2E)-thiogeraniol + phosphate + diphosphate. The catalysed reaction is 5-methylaminomethyl-2-thiouridine(34) in tRNA + (2E)-geranyl diphosphate = 5-methylaminomethyl-S-(2E)-geranyl-thiouridine(34) in tRNA + diphosphate. The enzyme catalyses 5-methylaminomethyl-S-(2E)-geranyl-thiouridine(34) in tRNA + selenophosphate + H(+) = 5-methylaminomethyl-2-(Se-phospho)selenouridine(34) in tRNA + (2E)-thiogeraniol. It carries out the reaction 5-methylaminomethyl-2-(Se-phospho)selenouridine(34) in tRNA + H2O = 5-methylaminomethyl-2-selenouridine(34) in tRNA + phosphate. In terms of biological role, involved in the post-transcriptional modification of the uridine at the wobble position (U34) of tRNA(Lys), tRNA(Glu) and tRNA(Gln). Catalyzes the conversion of 2-thiouridine (S2U-RNA) to 2-selenouridine (Se2U-RNA). Acts in a two-step process involving geranylation of 2-thiouridine (S2U) to S-geranyl-2-thiouridine (geS2U) and subsequent selenation of the latter derivative to 2-selenouridine (Se2U) in the tRNA chain. This chain is tRNA 2-selenouridine synthase, found in Pseudomonas entomophila (strain L48).